The following is a 726-amino-acid chain: MGKRAKMIAKIKELMEKYDRIRNIGICAHIDHGKTTLSDNLLAGAGMISKELAGEQLALDFDEEEAQRGITIFAANVSMVHTYEGNEYLINLIDTPGHVDFGGDVTRAMRAIDGAIVVVCAVEGVMPQTETVLRQALRERVKPVLFINKVDRLINELKLTPEELQSRFIKIINDINNLIRKMAPEEFKDKWLVRVEDGSVAFGSAYNNWAISVPFMKKSGITFKDIIKYCEEDRQDELAEKAPLHEVVLDMVIKHLPSPPEAQKYRIPHLWKGDLNSEAGKAMLNCDPNGPLAGVITKIIVDKHAGAVSVCRLFSGRIKQGDEVYMVNNQQKAKIQQVSVFMGPERIPVDSISAGNICALVGLKEASAGETICSPDKIIEPFEAITHISEPVITVAIEAKNTKDLPKLIEVLRQVAREDPTVKVEINEETGEHLLSGMGELHIEIITKLKIERDAGIPVEVGQPIVVYRETVTGQSPVVESKSPNKHNKLYFVVEPLEESVLQAYKEGRIPDVDTKRKLDDKIVQELIKAGMDPEEAKRVMCIYEGNVLINMTRGIVHLDEVKELIIQGFKEAMRNGPLAAEKCQGVKVKLMDAVLHEDAIHRGPAQMIPAARFGIRDAMMQANPVLLEPMQFVYINTPQDFMGAAMREISNRRGQILDMEQEGDMAIIKAKCPVAEMFGFAGAIRGATQGRCLWSIEFAGYEKVPRDMQEQLIKQIRERKGLKLE.

One can recognise a tr-type G domain in the interval 19-260 (DRIRNIGICA…MVIKHLPSPP (242 aa)). GTP is bound by residues 28–35 (AHIDHGKT), 94–98 (DTPGH), and 148–151 (NKVD). A Diphthamide modification is found at His602.

The protein belongs to the TRAFAC class translation factor GTPase superfamily. Classic translation factor GTPase family. EF-G/EF-2 subfamily.

It is found in the cytoplasm. In terms of biological role, catalyzes the GTP-dependent ribosomal translocation step during translation elongation. During this step, the ribosome changes from the pre-translocational (PRE) to the post-translocational (POST) state as the newly formed A-site-bound peptidyl-tRNA and P-site-bound deacylated tRNA move to the P and E sites, respectively. Catalyzes the coordinated movement of the two tRNA molecules, the mRNA and conformational changes in the ribosome. The polypeptide is Elongation factor 2 (fusA) (Methanocaldococcus jannaschii (strain ATCC 43067 / DSM 2661 / JAL-1 / JCM 10045 / NBRC 100440) (Methanococcus jannaschii)).